We begin with the raw amino-acid sequence, 73 residues long: DNA-binding protein S1FA3 (73 aa).

Residues 47-52 carry the Nuclear localization signal motif; it reads PPRKKK. Residues 47 to 63 show a composition bias toward basic residues; that stretch reads PPRKKKPVSKKKMKKEK. Residues 47–73 are disordered; the sequence is PPRKKKPVSKKKMKKEKMKQGVQVPGE.

The protein belongs to the S1FA transcription factor family.

Its subcellular location is the nucleus. Functionally, DNA-binding protein that specifically recognizes a negative element (S1F) within the RPS1 promoter. This is DNA-binding protein S1FA3 (S1FA3) from Arabidopsis thaliana (Mouse-ear cress).